The primary structure comprises 206 residues: MARYIGPKCKLSRREGTDLFLKSGVRALDSKCNIETPPGMHGARRGRLSEYGVQLREKQKVRRIYGVLEKQFRNYYKEAARGKGATGENLLQLLEGRLDNVVYRMGFGSTRAEARQLVSHKAVLVNDKPVNIPSYQVKPGDVVSVREKAKNQLRVKGALDLASSRAPVSWVEVDANKMSGVYKSVPERTELPADINENLIVELYSK.

An S4 RNA-binding domain is found at 96 to 156; sequence GRLDNVVYRM…EKAKNQLRVK (61 aa).

This sequence belongs to the universal ribosomal protein uS4 family. As to quaternary structure, part of the 30S ribosomal subunit. Contacts protein S5. The interaction surface between S4 and S5 is involved in control of translational fidelity.

Functionally, one of the primary rRNA binding proteins, it binds directly to 16S rRNA where it nucleates assembly of the body of the 30S subunit. In terms of biological role, with S5 and S12 plays an important role in translational accuracy. The protein is Small ribosomal subunit protein uS4 of Marinobacter nauticus (strain ATCC 700491 / DSM 11845 / VT8) (Marinobacter aquaeolei).